The following is a 504-amino-acid chain: MSKKALLMILDGWGLGDHGKDDVIFNTATPYWDYLMETYPHSQLQASGENVGLPDGQMGNSEVGHLNIGAGRVVYQDLVKINLSCRDNSILKNPEIVSAFSYAKENGKNVHFMGLTSDGGVHSSLDHLFKLCDIAKEYNIENTFVHCFMDGRDTDPKSGKGFIEQLEAHCAKSAGKVASIIGRYYAMDRDKRWERVKEAYDLLVNGIGKKATDMVQAMQESYDEGVTDEFIKPIVNAGVDGTIKEGDVVIFFNYRNDRAKELTVVLTQQDMPEAGMHTIPGLQYYCMTPYDASFKGVHILFDKENVANTLGEYLAANGKKQLHIAETEKYAHVTFFFNGGRETPYDNEDRILVPSPKVATYDLKPEMSAYEVKDKLVAAINENKYDFIVVNYANGDMVGHTGIYEAIEKAVVAVDACVKDTIEAAKAQGYEAIIIADHGNADHALNEDGTPNTAHSLNPVPCVYVTENKEAKVADGRLADVAPTILHILDMVQPAEMTGCNLIK.

Residues Asp11 and Ser61 each coordinate Mn(2+). Residue Ser61 is the Phosphoserine intermediate of the active site. Substrate-binding positions include His122, 152–153 (RD), Arg183, Arg189, 255–258 (RNDR), and Lys329. Residues Asp396, His400, Asp437, His438, and His455 each coordinate Mn(2+).

It belongs to the BPG-independent phosphoglycerate mutase family. As to quaternary structure, monomer. It depends on Mn(2+) as a cofactor.

It catalyses the reaction (2R)-2-phosphoglycerate = (2R)-3-phosphoglycerate. The protein operates within carbohydrate degradation; glycolysis; pyruvate from D-glyceraldehyde 3-phosphate: step 3/5. Its function is as follows. Catalyzes the interconversion of 2-phosphoglycerate and 3-phosphoglycerate. In Bacteroides fragilis (strain YCH46), this protein is 2,3-bisphosphoglycerate-independent phosphoglycerate mutase.